Consider the following 79-residue polypeptide: Small ribosomal subunit protein bS18 (79 aa).

The protein belongs to the bacterial ribosomal protein bS18 family. Part of the 30S ribosomal subunit. Forms a tight heterodimer with protein bS6.

Binds as a heterodimer with protein bS6 to the central domain of the 16S rRNA, where it helps stabilize the platform of the 30S subunit. The protein is Small ribosomal subunit protein bS18 of Bacillus licheniformis (strain ATCC 14580 / DSM 13 / JCM 2505 / CCUG 7422 / NBRC 12200 / NCIMB 9375 / NCTC 10341 / NRRL NRS-1264 / Gibson 46).